A 739-amino-acid chain; its full sequence is Phosphoribosylformylglycinamidine synthase subunit PurL (739 aa).

The active site involves His-54. ATP-binding residues include Tyr-57 and Lys-96. Glu-98 serves as a coordination point for Mg(2+). Residues 99-102 (SHNH) and Arg-121 each bind substrate. Catalysis depends on His-100, which acts as the Proton acceptor. Residue Asp-122 coordinates Mg(2+). Position 245 (Gln-245) interacts with substrate. Asp-275 is a binding site for Mg(2+). 319–321 (ESQ) serves as a coordination point for substrate. Residues Asp-504 and Gly-541 each contribute to the ATP site. A Mg(2+)-binding site is contributed by Asn-542. A substrate-binding site is contributed by Ser-544.

This sequence belongs to the FGAMS family. As to quaternary structure, monomer. Part of the FGAM synthase complex composed of 1 PurL, 1 PurQ and 2 PurS subunits.

It localises to the cytoplasm. The enzyme catalyses N(2)-formyl-N(1)-(5-phospho-beta-D-ribosyl)glycinamide + L-glutamine + ATP + H2O = 2-formamido-N(1)-(5-O-phospho-beta-D-ribosyl)acetamidine + L-glutamate + ADP + phosphate + H(+). It functions in the pathway purine metabolism; IMP biosynthesis via de novo pathway; 5-amino-1-(5-phospho-D-ribosyl)imidazole from N(2)-formyl-N(1)-(5-phospho-D-ribosyl)glycinamide: step 1/2. Functionally, part of the phosphoribosylformylglycinamidine synthase complex involved in the purines biosynthetic pathway. Catalyzes the ATP-dependent conversion of formylglycinamide ribonucleotide (FGAR) and glutamine to yield formylglycinamidine ribonucleotide (FGAM) and glutamate. The FGAM synthase complex is composed of three subunits. PurQ produces an ammonia molecule by converting glutamine to glutamate. PurL transfers the ammonia molecule to FGAR to form FGAM in an ATP-dependent manner. PurS interacts with PurQ and PurL and is thought to assist in the transfer of the ammonia molecule from PurQ to PurL. The protein is Phosphoribosylformylglycinamidine synthase subunit PurL of Lactococcus lactis subsp. cremoris (Streptococcus cremoris).